Reading from the N-terminus, the 388-residue chain is Chorismate synthase (388 aa).

Arg-39 and Arg-45 together coordinate NADP(+). FMN contacts are provided by residues 130-132 (RSS), 251-252 (NA), Gly-296, 311-315 (KPIPT), and Arg-337.

This sequence belongs to the chorismate synthase family. In terms of assembly, homotetramer. FMNH2 serves as cofactor.

It carries out the reaction 5-O-(1-carboxyvinyl)-3-phosphoshikimate = chorismate + phosphate. The protein operates within metabolic intermediate biosynthesis; chorismate biosynthesis; chorismate from D-erythrose 4-phosphate and phosphoenolpyruvate: step 7/7. Its function is as follows. Catalyzes the anti-1,4-elimination of the C-3 phosphate and the C-6 proR hydrogen from 5-enolpyruvylshikimate-3-phosphate (EPSP) to yield chorismate, which is the branch point compound that serves as the starting substrate for the three terminal pathways of aromatic amino acid biosynthesis. This reaction introduces a second double bond into the aromatic ring system. This is Chorismate synthase from Streptococcus pyogenes serotype M5 (strain Manfredo).